Reading from the N-terminus, the 127-residue chain is DNA-directed RNA polymerase subunit omega (127 aa).

It belongs to the RNA polymerase subunit omega family. In terms of assembly, the RNAP catalytic core consists of 2 alpha, 1 beta, 1 beta' and 1 omega subunit. When a sigma factor is associated with the core the holoenzyme is formed, which can initiate transcription.

The catalysed reaction is RNA(n) + a ribonucleoside 5'-triphosphate = RNA(n+1) + diphosphate. Its function is as follows. Promotes RNA polymerase assembly. Latches the N- and C-terminal regions of the beta' subunit thereby facilitating its interaction with the beta and alpha subunits. The protein is DNA-directed RNA polymerase subunit omega of Rickettsia rickettsii (strain Iowa).